The primary structure comprises 728 residues: Ankyrin repeat protein A (728 aa).

ANK repeat units lie at residues 381–410 (INLP…ETGY), 429–458 (NGFS…KLAA), 477–506 (TSSH…LLIR), 525–554 (YGCP…SLAQ), and 573–602 (ARDT…TLFN).

The protein belongs to the Toxin_15 family.

This chain is Ankyrin repeat protein A (arpA), found in Escherichia coli (strain K12).